We begin with the raw amino-acid sequence, 196 residues long: Molybdenum cofactor guanylyltransferase (196 aa).

GTP is bound by residues 10 to 12 (LAG), K23, N51, D69, and D99. D99 is a binding site for Mg(2+).

Belongs to the MobA family. As to quaternary structure, monomer. It depends on Mg(2+) as a cofactor.

It localises to the cytoplasm. The catalysed reaction is Mo-molybdopterin + GTP + H(+) = Mo-molybdopterin guanine dinucleotide + diphosphate. Its function is as follows. Transfers a GMP moiety from GTP to Mo-molybdopterin (Mo-MPT) cofactor (Moco or molybdenum cofactor) to form Mo-molybdopterin guanine dinucleotide (Mo-MGD) cofactor. This is Molybdenum cofactor guanylyltransferase from Shewanella loihica (strain ATCC BAA-1088 / PV-4).